Reading from the N-terminus, the 123-residue chain is Putative membrane protein insertion efficiency factor (123 aa).

The segment at 1–23 (MGSCGGKHTGKGAPKPYSRNFTD) is disordered.

Belongs to the UPF0161 family.

It is found in the cell inner membrane. Functionally, could be involved in insertion of integral membrane proteins into the membrane. This Brucella ovis (strain ATCC 25840 / 63/290 / NCTC 10512) protein is Putative membrane protein insertion efficiency factor.